Consider the following 171-residue polypeptide: ATP synthase subunit b (171 aa).

Residues 12-34 traverse the membrane as a helical segment; it reads FGLNLNLFETNVINLAVVIFGLY.

Belongs to the ATPase B chain family. F-type ATPases have 2 components, F(1) - the catalytic core - and F(0) - the membrane proton channel. F(1) has five subunits: alpha(3), beta(3), gamma(1), delta(1), epsilon(1). F(0) has four main subunits: a(1), b(1), b'(1) and c(10-14). The alpha and beta chains form an alternating ring which encloses part of the gamma chain. F(1) is attached to F(0) by a central stalk formed by the gamma and epsilon chains, while a peripheral stalk is formed by the delta, b and b' chains.

The protein localises to the cellular thylakoid membrane. In terms of biological role, f(1)F(0) ATP synthase produces ATP from ADP in the presence of a proton or sodium gradient. F-type ATPases consist of two structural domains, F(1) containing the extramembraneous catalytic core and F(0) containing the membrane proton channel, linked together by a central stalk and a peripheral stalk. During catalysis, ATP synthesis in the catalytic domain of F(1) is coupled via a rotary mechanism of the central stalk subunits to proton translocation. Component of the F(0) channel, it forms part of the peripheral stalk, linking F(1) to F(0). This Prochlorococcus marinus (strain MIT 9211) protein is ATP synthase subunit b.